The chain runs to 140 residues: 3-hydroxyacyl-[acyl-carrier-protein] dehydratase FabZ (140 aa).

H48 is an active-site residue.

Belongs to the thioester dehydratase family. FabZ subfamily.

The protein localises to the cytoplasm. The enzyme catalyses a (3R)-hydroxyacyl-[ACP] = a (2E)-enoyl-[ACP] + H2O. Functionally, involved in unsaturated fatty acids biosynthesis. Catalyzes the dehydration of short chain beta-hydroxyacyl-ACPs and long chain saturated and unsaturated beta-hydroxyacyl-ACPs. The protein is 3-hydroxyacyl-[acyl-carrier-protein] dehydratase FabZ of Latilactobacillus sakei subsp. sakei (strain 23K) (Lactobacillus sakei subsp. sakei).